The primary structure comprises 953 residues: Glycine dehydrogenase (decarboxylating) (953 aa).

K705 carries the N6-(pyridoxal phosphate)lysine modification.

Belongs to the GcvP family. As to quaternary structure, the glycine cleavage system is composed of four proteins: P, T, L and H. Pyridoxal 5'-phosphate is required as a cofactor.

The enzyme catalyses N(6)-[(R)-lipoyl]-L-lysyl-[glycine-cleavage complex H protein] + glycine + H(+) = N(6)-[(R)-S(8)-aminomethyldihydrolipoyl]-L-lysyl-[glycine-cleavage complex H protein] + CO2. The glycine cleavage system catalyzes the degradation of glycine. The P protein binds the alpha-amino group of glycine through its pyridoxal phosphate cofactor; CO(2) is released and the remaining methylamine moiety is then transferred to the lipoamide cofactor of the H protein. The polypeptide is Glycine dehydrogenase (decarboxylating) (Sodalis glossinidius (strain morsitans)).